Here is a 2058-residue protein sequence, read N- to C-terminus: Protein Daple (2058 aa).

The region spanning 11-131 (HFLESPLVTW…KILLLMLGCA (121 aa)) is the Calponin-homology (CH) domain. 5 coiled-coil regions span residues 195 to 221 (HLKRLIDERDECKEVIVDLTQERDYLQ), 247 to 428 (EDKK…SMNE), 455 to 1016 (ELNE…LRGA), 1043 to 1082 (ELLKFKDRTIELERNNAALQAEKKLFREQLQHLESHNLNL), and 1108 to 1388 (ANLQ…KFYD). Disordered regions lie at residues 1406 to 1444 (LIKPKKEPSRESVKSPTDVQSKTMDNAEMAASPSSMRPL), 1480 to 1592 (HRMS…EDMI), 1617 to 1655 (TKNRESPVNRNSLHLYDYPEKKNSSRTPTRPRPGSPGSE), 1696 to 1724 (LHPSSQSPSPTLHLKDPSQTAVPKSLPSA), 1831 to 1857 (YSATSSSQSPEPQALSPHGAMGSRGNS), 1940 to 1959 (LALPKEETTPPQPAPSASSL), and 1988 to 2051 (PVRP…PQTV). Over residues 1409–1418 (PKKEPSRESV) the composition is skewed to basic and acidic residues. Over residues 1419–1429 (KSPTDVQSKTM) the composition is skewed to polar residues. Basic and acidic residues predominate over residues 1494-1506 (GPEHLSRSRRMES). The span at 1552–1577 (NAGSSRVPWTSSLEVSRSASNSSSPL) shows a compositional bias: polar residues. 2 short sequence motifs (GBA) span residues 1653-1675 (GSEMVTLEEFLQESSRQSPPSRR) and 1676-1697 (HSLNDSELITLHQFLFEAETLH). Polar residues predominate over residues 1831–1841 (YSATSSSQSPE). The span at 2039 to 2048 (PASPDPSADP) shows a compositional bias: low complexity. Positions 2055–2058 (YGCV) match the PDZ-binding motif.

It belongs to the CCDC88 family. In terms of assembly, interacts with dvl2/dsh via the PDZ-binding motif. Expressed weakly in gastrulae, with slightly stronger expression in the dorsal region. In neurulae, expressed in the neural plate with strong expression in the presumptive mesencephalic region. At the tailbud stage, expressed in somatic cells and in part of the tail. Also strongly expressed in regions of the head including eye vesicles, otic vesicles, olfactory placode and the pharyngeal cavity.

The protein resides in the cytoplasm. The protein localises to the cell junction. Functionally, positive regulator of Wnt signaling, acting synergistically with dvl2/dsh. Functions upstream of ctnnb1/beta-catenin in the canonical Wnt pathway, and also activates jnk in the Wnt/planar cell polarity (PCP) pathway. Acts as a non-receptor guanine nucleotide exchange factor which binds to and activates guanine nucleotide-binding protein G(i) alpha subunits. This promotes apical cell constriction and subsequent bending of the neural plate during neurulation via arhgef18. In Xenopus laevis (African clawed frog), this protein is Protein Daple (ccdc88c).